A 465-amino-acid chain; its full sequence is Ribulose bisphosphate carboxylase large chain (465 aa).

K4 carries the N6,N6,N6-trimethyllysine modification. Substrate-binding residues include N113 and T163. K165 (proton acceptor) is an active-site residue. K167 provides a ligand contact to substrate. Mg(2+)-binding residues include K191, D193, and E194. At K191 the chain carries N6-carboxylysine. H284 functions as the Proton acceptor in the catalytic mechanism. Substrate-binding residues include R285, H317, and S369.

This sequence belongs to the RuBisCO large chain family. Type I subfamily. Heterohexadecamer of 8 large chains and 8 small chains; disulfide-linked. The disulfide link is formed within the large subunit homodimers. Requires Mg(2+) as cofactor. In terms of processing, the disulfide bond which can form in the large chain dimeric partners within the hexadecamer appears to be associated with oxidative stress and protein turnover.

It localises to the plastid. Its subcellular location is the chloroplast. It carries out the reaction 2 (2R)-3-phosphoglycerate + 2 H(+) = D-ribulose 1,5-bisphosphate + CO2 + H2O. The catalysed reaction is D-ribulose 1,5-bisphosphate + O2 = 2-phosphoglycolate + (2R)-3-phosphoglycerate + 2 H(+). Functionally, ruBisCO catalyzes two reactions: the carboxylation of D-ribulose 1,5-bisphosphate, the primary event in carbon dioxide fixation, as well as the oxidative fragmentation of the pentose substrate in the photorespiration process. Both reactions occur simultaneously and in competition at the same active site. In Dillenia indica (Elephant apple), this protein is Ribulose bisphosphate carboxylase large chain.